Here is a 154-residue protein sequence, read N- to C-terminus: UPF0756 membrane protein BLi03063/BL00400 (154 aa).

The next 4 helical transmembrane spans lie at 8–28 (FLIL…IIAV), 54–74 (WGVT…EIGF), 87–107 (WIAL…ITLL), and 117–137 (LVFG…GPLI).

The protein belongs to the UPF0756 family.

Its subcellular location is the cell membrane. This is UPF0756 membrane protein BLi03063/BL00400 from Bacillus licheniformis (strain ATCC 14580 / DSM 13 / JCM 2505 / CCUG 7422 / NBRC 12200 / NCIMB 9375 / NCTC 10341 / NRRL NRS-1264 / Gibson 46).